The following is a 329-amino-acid chain: MDGIAFILIVGAILVFISLFFAIVPVGLWISAFAANVRVSIFTLIGMRLRRVVPSRVINPLIKATKAGINVSINKLEAHYLAGGNVDRVVNALIAAQRANIPLEFERAAAIDLAGRNVLEAVQMSVNPKVIETPVVAAIAKDGIELRAKARVTVRANIDRLVGGAGEQTIIARVGEGVVTTVGSATDHKQVLENPDAISKTVLSKGLDAGTAFEILSIDIADIDVGRNVGAQLQTDQAEADKRIAQAKAEERRAMAVAREQEMKAMVQEMRAKVVEAEAEVPKALAAALREGKIGVLDYYHLQNLIADTQMRDSISKMSKHDDSSSDKK.

A run of 2 helical transmembrane segments spans residues 4–24 and 26–46; these read IAFI…FAIV and VGLW…TLIG.

Belongs to the flotillin-like FloA family. In terms of assembly, homooligomerizes.

The protein localises to the cell membrane. The protein resides in the membrane raft. In terms of biological role, found in functional membrane microdomains (FMM) that may be equivalent to eukaryotic membrane rafts. FMMs are highly dynamic and increase in number as cells age. Flotillins are thought to be important factors in membrane fluidity. The protein is Flotillin-like protein FloA of Acetivibrio thermocellus (strain ATCC 27405 / DSM 1237 / JCM 9322 / NBRC 103400 / NCIMB 10682 / NRRL B-4536 / VPI 7372) (Clostridium thermocellum).